The following is a 505-amino-acid chain: Histidine ammonia-lyase (505 aa).

A cross-link (5-imidazolinone (Ala-Gly)) is located at residues 144–146; that stretch reads ASG. Position 145 is a 2,3-didehydroalanine (Ser) (S145).

The protein belongs to the PAL/histidase family. In terms of processing, contains an active site 4-methylidene-imidazol-5-one (MIO), which is formed autocatalytically by cyclization and dehydration of residues Ala-Ser-Gly.

It is found in the cytoplasm. It carries out the reaction L-histidine = trans-urocanate + NH4(+). It participates in amino-acid degradation; L-histidine degradation into L-glutamate; N-formimidoyl-L-glutamate from L-histidine: step 1/3. The polypeptide is Histidine ammonia-lyase (Legionella pneumophila (strain Corby)).